The following is a 484-amino-acid chain: UDP-N-acetylmuramate--L-alanine ligase (484 aa).

125-131 (GTHGKTT) contributes to the ATP binding site.

The protein belongs to the MurCDEF family.

It is found in the cytoplasm. The enzyme catalyses UDP-N-acetyl-alpha-D-muramate + L-alanine + ATP = UDP-N-acetyl-alpha-D-muramoyl-L-alanine + ADP + phosphate + H(+). It functions in the pathway cell wall biogenesis; peptidoglycan biosynthesis. In terms of biological role, cell wall formation. The protein is UDP-N-acetylmuramate--L-alanine ligase of Buchnera aphidicola subsp. Acyrthosiphon pisum (strain 5A).